The chain runs to 589 residues: EZH inhibitory protein (589 aa).

3 disordered regions span residues 1 to 46 (MASS…LRLR), 61 to 548 (AGED…SGPN), and 561 to 589 (LDSS…KCRG). Gly residues-rich tracts occupy residues 29-38 (GPRGRGGPSG) and 105-114 (PKGGGKADQG). The segment covering 147–161 (GAAGPPLPGARGSPA) has biased composition (low complexity). Positions 193-204 (LRSSTSQGSGST) are enriched in polar residues. Composition is skewed to low complexity over residues 299 to 308 (RSSASAVSPE), 325 to 334 (RSSASVVSPE), 351 to 360 (RSSASVVSPE), and 374 to 390 (PRAT…TTRS). The residue at position 306 (Ser306) is a Phosphoserine. Over residues 426 to 437 (MRLDLQVDREPE) the composition is skewed to basic and acidic residues. Positions 438–449 (SEAEQEEQELES) are enriched in acidic residues. The segment covering 450 to 465 (EPGPSSRPQASRSSSR) has biased composition (low complexity). Residues 482 to 490 (RRPVRMRAS) form a sufficient for interaction with EZH2 region. A necessary and sufficient for inhibition of PRC2/EED-EZH1 and PRC2/EED-EZH2 complex activity region spans residues 484-503 (PVRMRASSPSPPGRLYPLPK). The span at 509 to 547 (VHSPSSSSSESSSVSSSHSPLNKAPDPGSSPPLSSLSGP) shows a compositional bias: low complexity. Basic and acidic residues predominate over residues 575 to 589 (AAPHTREEEDKKCRG).

In terms of assembly, interacts with PRC2/EED-EZH1 complex member EZH1 and with PRC2/EED-EZH2 complex member EZH2; the interaction blocks EZH1/EZH2 methyltransferase activity. Interacts (via C-terminus) with SUZ12 which is a member of the PRC2/EED-EZH1 and PRC2/EED-EZH2 complexes. As to expression, highly expressed in ovary with lower expression in testis and very low levels in other tissues tested including prostate, brain, kidney, spleen and liver. During spermatogenesis, expressed mainly in spermatogonia with very low expression in spermatocytes I and II.

It localises to the nucleus. It is found in the cytoplasm. Functionally, inhibits PRC2/EED-EZH1 and PRC2/EED-EZH2 complex function by inhibiting EZH1/EZH2 methyltransferase activity, thereby causing down-regulation of histone H3 trimethylation at 'Lys-27' (H3K27me3). Probably inhibits methyltransferase activity by limiting the stimulatory effect of cofactors such as AEBP2 and JARID2. Inhibits H3K27me3 deposition during spermatogenesis and oogenesis. The sequence is that of EZH inhibitory protein from Mus musculus (Mouse).